Consider the following 287-residue polypeptide: Toxin zeta (287 aa).

40–47 contributes to the ATP binding site; sequence GQPGSGKT. N66 contacts substrate. The Proton acceptor role is filled by D67. Residues E100, T118, R120, and T128 each coordinate substrate. Positions 267-287 are disordered; it reads KLESLQPPTPPIPKTPKLPGI. Over residues 273 to 287 the composition is skewed to pro residues; it reads PPTPPIPKTPKLPGI.

The protein belongs to the zeta toxin family. As to quaternary structure, in the presence of the epsilon antitoxin forms an inactive PezA(2)PezT(2) heterotetramer. The heterotetramer is still able to bind the UNAG substrate.

It catalyses the reaction UDP-N-acetyl-alpha-D-glucosamine + ATP = UDP-N-acetyl-alpha-D-glucosamine 3'-phosphate + ADP + H(+). Toxic component of a type II toxin-antitoxin (TA) system. Phosphorylates UDP-N-acetyl-D-glucosamine (UNAG) on the 3'-hydroxyl group of the N-acetyl-D-glucosamine moiety, yielding UNAG-3P. UNAG-3P inhibits MurA, the first committed step in cell wall synthesis, which is then blocked. Phosphorylation is inhibited by cognate epsilon antitoxin. Part of a postsegregational killing (PSK) system involved in the killing of plasmid-free cells. The zeta toxin induces programmed cell death. The chain is Toxin zeta from Streptococcus pyogenes.